The chain runs to 423 residues: Glucose-1-phosphate adenylyltransferase (423 aa).

Residues Y107, G172, 187-188, and S205 each bind alpha-D-glucose 1-phosphate; that span reads EK.

The protein belongs to the bacterial/plant glucose-1-phosphate adenylyltransferase family. In terms of assembly, homotetramer.

It catalyses the reaction alpha-D-glucose 1-phosphate + ATP + H(+) = ADP-alpha-D-glucose + diphosphate. It functions in the pathway glycan biosynthesis; glycogen biosynthesis. Functionally, involved in the biosynthesis of ADP-glucose, a building block required for the elongation reactions to produce glycogen. Catalyzes the reaction between ATP and alpha-D-glucose 1-phosphate (G1P) to produce pyrophosphate and ADP-Glc. The polypeptide is Glucose-1-phosphate adenylyltransferase (Albidiferax ferrireducens (strain ATCC BAA-621 / DSM 15236 / T118) (Rhodoferax ferrireducens)).